The sequence spans 430 residues: Enolase (430 aa).

Gln-167 provides a ligand contact to (2R)-2-phosphoglycerate. The active-site Proton donor is the Glu-209. Positions 246, 287, and 314 each coordinate Mg(2+). (2R)-2-phosphoglycerate is bound by residues Lys-339, Arg-368, Ser-369, and Lys-390. Lys-339 acts as the Proton acceptor in catalysis.

It belongs to the enolase family. Mg(2+) serves as cofactor.

The protein resides in the cytoplasm. It localises to the secreted. The protein localises to the cell surface. It carries out the reaction (2R)-2-phosphoglycerate = phosphoenolpyruvate + H2O. It functions in the pathway carbohydrate degradation; glycolysis; pyruvate from D-glyceraldehyde 3-phosphate: step 4/5. Its function is as follows. Catalyzes the reversible conversion of 2-phosphoglycerate (2-PG) into phosphoenolpyruvate (PEP). It is essential for the degradation of carbohydrates via glycolysis. In Prochlorococcus marinus subsp. pastoris (strain CCMP1986 / NIES-2087 / MED4), this protein is Enolase.